A 611-amino-acid chain; its full sequence is Rop guanine nucleotide exchange factor 5 (611 aa).

The segment at 1–62 is disordered; it reads MENLVKSCAG…PPPPPSQILG (62 aa). Low complexity predominate over residues 34-51; that stretch reads STSGASYESSSTTTVASS. Residues 93 to 477 form the PRONE domain; that stretch reads FKAKEMNSAD…DLTKQSDDNN (385 aa). Disordered stretches follow at residues 513 to 541 and 588 to 611; these read TTPGFSPSMISPKKGERRTPYSSKDTNKI and DVEEEKKRNSTSVHQKGPPKYTVS. The span at 525-541 shows a compositional bias: basic and acidic residues; that stretch reads KKGERRTPYSSKDTNKI.

In terms of biological role, guanine-nucleotide exchange factor (GEF) that acts as an activator of Rop (Rho of plants) GTPases by promoting the exchange of GDP for GTP. This chain is Rop guanine nucleotide exchange factor 5 (ROPGEF5), found in Arabidopsis thaliana (Mouse-ear cress).